We begin with the raw amino-acid sequence, 351 residues long: C(7)-cyclitol 7-kinase (351 aa).

This sequence belongs to the ROK (NagC/XylR) family.

The enzyme catalyses valienone + ATP = valienone 7-phosphate + ADP + H(+). It carries out the reaction validone + ATP = validone 7-phosphate + ADP + H(+). Involved in the biosynthesis of the antifungal agent validamycin A. Catalyzes the phosphorylation of valienone and validone to their 7-phosphate derivatives. The chain is C(7)-cyclitol 7-kinase from Streptomyces hygroscopicus subsp. jinggangensis (strain 5008).